The chain runs to 332 residues: Cinnamoyl-CoA reductase 2 (332 aa).

NADP(+) contacts are provided by residues 12–18 (GAGGYIA), arginine 37, lysine 43, 63–64 (DL), 83–85 (TAS), tyrosine 156, lysine 160, 183–186 (PVLV), and serine 198. The cysteines at positions 149 and 157 are disulfide-linked. Lysine 160 functions as the Proton donor in the catalytic mechanism.

It belongs to the NAD(P)-dependent epimerase/dehydratase family. Dihydroflavonol-4-reductase subfamily. As to expression, expressed at low levels in leaves, stems and flowers.

The enzyme catalyses (E)-cinnamaldehyde + NADP(+) + CoA = (E)-cinnamoyl-CoA + NADPH + H(+). Its pathway is aromatic compound metabolism; phenylpropanoid biosynthesis. Functionally, cinnamoyl-CoA reductase probably involved in the formation of phenolic compounds associated with the hypersensitive response. Seems not to be involved in lignin biosynthesis. The chain is Cinnamoyl-CoA reductase 2 (CCR2) from Arabidopsis thaliana (Mouse-ear cress).